Reading from the N-terminus, the 373-residue chain is MFECTHCDLHFESKSKLATHQKTKKCTAHRFLGFTCQKCWDHVKGYENALNHVAKCGQKLQTFEGIQALVAQLALHYKCEVVFDHENGKGQINFQKVFNYTHPSNLQEMREPIEPRSMHVWYKMLRKYSDQYLLGGHGLYLNDINYTLFRLSDAFKFLAAKYDARTLLKMLWIEPTYKLFHVKDGIVYVLGKIQSQTQEGRKWFGDTFCLQRNETIVKCLWYRDPTLEQLWSNTIPLLKEILNLYLDLGTWLLKRKNIKLKNDHKIHHNCKTIIENVFKEYDVTNLIENITVLNSRQTFTTMFREILTQHQKDLRLPSNIHHVFKDDLLPSSLGGQEFSLMTMTEQKISGGNQYHLMYHILPESERPMFETKI.

Residues 2 to 29 (FECTHCDLHFESKSKLATHQKTKKCTAH) form a C2H2-type zinc finger.

This sequence belongs to the IIV-6 302L family.

This is Putative zinc finger protein 012R from Invertebrate iridescent virus 3 (IIV-3).